The sequence spans 293 residues: Phosphoribosylaminoimidazole-succinocarboxamide synthase (293 aa).

The protein belongs to the SAICAR synthetase family.

The catalysed reaction is 5-amino-1-(5-phospho-D-ribosyl)imidazole-4-carboxylate + L-aspartate + ATP = (2S)-2-[5-amino-1-(5-phospho-beta-D-ribosyl)imidazole-4-carboxamido]succinate + ADP + phosphate + 2 H(+). The protein operates within purine metabolism; IMP biosynthesis via de novo pathway; 5-amino-1-(5-phospho-D-ribosyl)imidazole-4-carboxamide from 5-amino-1-(5-phospho-D-ribosyl)imidazole-4-carboxylate: step 1/2. The chain is Phosphoribosylaminoimidazole-succinocarboxamide synthase from Bordetella parapertussis (strain 12822 / ATCC BAA-587 / NCTC 13253).